We begin with the raw amino-acid sequence, 158 residues long: Transcriptional regulator MraZ (158 aa).

SpoVT-AbrB domains are found at residues 5 to 50 and 91 to 134; these read IYET…GGVY and AVEC…SQSE.

Belongs to the MraZ family. In terms of assembly, forms oligomers.

It localises to the cytoplasm. The protein localises to the nucleoid. The chain is Transcriptional regulator MraZ from Geobacter metallireducens (strain ATCC 53774 / DSM 7210 / GS-15).